The primary structure comprises 95 residues: Trypomastigote decay-accelerating factor (95 aa).

It belongs to the receptors of complement activation (RCA) family.

Its function is as follows. Interferes with the efficient assembly of the host C3 convertase. Could protect parasites from complement-mediated lysis by sera from a number of different species. The sequence is that of Trypomastigote decay-accelerating factor from Trypanosoma cruzi.